The sequence spans 353 residues: Ion-translocating oxidoreductase complex subunit D (353 aa).

Transmembrane regions (helical) follow at residues 20–40 (IMLLVLIATLPGIAAQWYYFG), 44–64 (IIQVLIASVAALVAEAAILHL), 77–108 (SALLTALLLGVSIPSLAPWWMVTIGTVFAIII), and 123–143 (PAMVGYVVLVISFPVQMTSWL). Thr-187 carries the post-translational modification FMN phosphoryl threonine. 4 helical membrane passes run 214–234 (VIAGIGWQWVNVGFLLGGVFL), 242–262 (WHIPVSFIASLAFFATLGWLL), 267–287 (LVTPMIHLFSGATMLGAFFIA), and 301–318 (LLYGVLIGLLTWLIRSYG).

It belongs to the NqrB/RnfD family. In terms of assembly, the complex is composed of six subunits: RnfA, RnfB, RnfC, RnfD, RnfE and RnfG. It depends on FMN as a cofactor.

The protein localises to the cell inner membrane. Its function is as follows. Part of a membrane-bound complex that couples electron transfer with translocation of ions across the membrane. This is Ion-translocating oxidoreductase complex subunit D from Erwinia tasmaniensis (strain DSM 17950 / CFBP 7177 / CIP 109463 / NCPPB 4357 / Et1/99).